The following is a 1002-amino-acid chain: E3 ubiquitin-protein ligase BRE1B (1002 aa).

The segment at 1 to 32 is disordered; that stretch reads MSGLSNKRAAGDGGSGPPEKKLNREEKTTTTL. Positions 18-28 are enriched in basic and acidic residues; it reads PEKKLNREEKT. An N6-acetyllysine modification is found at lysine 20. The residue at position 42 (serine 42) is a Phosphoserine. Positions 55-91 form a coiled coil; sequence KNKKLAERLEQRQACEDELRERIEKLEKRQATDDATL. Residues 120–148 are disordered; the sequence is SSGTEVPGCQEGLTRDVIPRTDPGTSDLR. 2 coiled-coil regions span residues 190–378 and 438–526; these read KAAV…LRSL and LQKK…ASGS. N6-acetyllysine occurs at positions 356 and 518. 2 disordered regions span residues 520 to 562 and 579 to 652; these read RAQA…PDSK and KKEE…ESEL. Glycyl lysine isopeptide (Lys-Gly) (interchain with G-Cter in SUMO2) cross-links involve residues lysine 579 and lysine 580. Phosphoserine is present on residues serine 585 and serine 586. Composition is skewed to basic and acidic residues over residues 603–620 and 634–652; these read RGREPEARPKRELREREG and RADREKAKAEEARRKESEL. A coiled-coil region spans residues 628–947; that stretch reads AASTLSRADR…EEIKEYKARL (320 aa). Residues 949–988 form an RING-type zinc finger; that stretch reads CPCCNTRKKDAVLTKCFHVFCFECVRGRYEARQRKCPKCN.

The protein belongs to the BRE1 family. Component of the RNF20/40 complex (also known as BRE1 complex) probably composed of 2 copies of RNF20/BRE1A and 2 copies of RNF40/BRE1B. Interacts with UBE2E1/UBCH6. Interacts with RB1 and WAC. May interact with STX1A. As to expression, ubiquitously expressed. Expressed in brain, testis, heart, liver and kidney. Weakly expressed in lung, spleen and skeletal muscle (at protein level).

Its subcellular location is the nucleus. The catalysed reaction is S-ubiquitinyl-[E2 ubiquitin-conjugating enzyme]-L-cysteine + [acceptor protein]-L-lysine = [E2 ubiquitin-conjugating enzyme]-L-cysteine + N(6)-ubiquitinyl-[acceptor protein]-L-lysine.. It participates in protein modification; protein ubiquitination. Its function is as follows. Component of the RNF20/40 E3 ubiquitin-protein ligase complex that mediates monoubiquitination of 'Lys-120' of histone H2B (H2BK120ub1). H2BK120ub1 gives a specific tag for epigenetic transcriptional activation and is also prerequisite for histone H3 'Lys-4' and 'Lys-79' methylation (H3K4me and H3K79me, respectively). It thereby plays a central role in histone code and gene regulation. The RNF20/40 complex forms a H2B ubiquitin ligase complex in cooperation with the E2 enzyme UBE2A or UBE2B; reports about the cooperation with UBE2E1/UBCH are contradictory. Required for transcriptional activation of Hox genes. This is E3 ubiquitin-protein ligase BRE1B (Rnf40) from Rattus norvegicus (Rat).